Here is a 213-residue protein sequence, read N- to C-terminus: Large ribosomal subunit protein uL3 (213 aa).

Gln151 is modified (N5-methylglutamine).

Belongs to the universal ribosomal protein uL3 family. In terms of assembly, part of the 50S ribosomal subunit. Forms a cluster with proteins L14 and L19. In terms of processing, methylated by PrmB.

In terms of biological role, one of the primary rRNA binding proteins, it binds directly near the 3'-end of the 23S rRNA, where it nucleates assembly of the 50S subunit. The chain is Large ribosomal subunit protein uL3 from Rhizobium etli (strain ATCC 51251 / DSM 11541 / JCM 21823 / NBRC 15573 / CFN 42).